We begin with the raw amino-acid sequence, 1336 residues long: DNA-directed RNA polymerase subunit beta' (1336 aa).

Zn(2+) is bound by residues C60, C62, C75, and C78. The Mg(2+) site is built by D535, D537, and D539. Residues C902, C984, C991, and C994 each contribute to the Zn(2+) site.

The protein belongs to the RNA polymerase beta' chain family. The RNAP catalytic core consists of 2 alpha, 1 beta, 1 beta' and 1 omega subunit. When a sigma factor is associated with the core the holoenzyme is formed, which can initiate transcription. Requires Mg(2+) as cofactor. Zn(2+) is required as a cofactor.

It carries out the reaction RNA(n) + a ribonucleoside 5'-triphosphate = RNA(n+1) + diphosphate. DNA-dependent RNA polymerase catalyzes the transcription of DNA into RNA using the four ribonucleoside triphosphates as substrates. The chain is DNA-directed RNA polymerase subunit beta' from Corynebacterium diphtheriae (strain ATCC 700971 / NCTC 13129 / Biotype gravis).